Consider the following 260-residue polypeptide: Thiazole synthase (260 aa).

K96 (schiff-base intermediate with DXP) is an active-site residue. Residues G157, 183–184 (AG), and 205–206 (AS) contribute to the 1-deoxy-D-xylulose 5-phosphate site.

This sequence belongs to the ThiG family. In terms of assembly, homotetramer. Forms heterodimers with either ThiH or ThiS.

It is found in the cytoplasm. The enzyme catalyses [ThiS sulfur-carrier protein]-C-terminal-Gly-aminoethanethioate + 2-iminoacetate + 1-deoxy-D-xylulose 5-phosphate = [ThiS sulfur-carrier protein]-C-terminal Gly-Gly + 2-[(2R,5Z)-2-carboxy-4-methylthiazol-5(2H)-ylidene]ethyl phosphate + 2 H2O + H(+). It functions in the pathway cofactor biosynthesis; thiamine diphosphate biosynthesis. Its function is as follows. Catalyzes the rearrangement of 1-deoxy-D-xylulose 5-phosphate (DXP) to produce the thiazole phosphate moiety of thiamine. Sulfur is provided by the thiocarboxylate moiety of the carrier protein ThiS. In vitro, sulfur can be provided by H(2)S. The sequence is that of Thiazole synthase from Corynebacterium glutamicum (strain R).